Here is a 239-residue protein sequence, read N- to C-terminus: Ribosomal RNA small subunit methyltransferase G (239 aa).

S-adenosyl-L-methionine-binding positions include Gly-105, Leu-110, 156 to 157 (VE), and Arg-169.

The protein belongs to the methyltransferase superfamily. RNA methyltransferase RsmG family.

The protein localises to the cytoplasm. It catalyses the reaction guanosine(527) in 16S rRNA + S-adenosyl-L-methionine = N(7)-methylguanosine(527) in 16S rRNA + S-adenosyl-L-homocysteine. Specifically methylates the N7 position of guanine in position 527 of 16S rRNA. This is Ribosomal RNA small subunit methyltransferase G from Verminephrobacter eiseniae (strain EF01-2).